The primary structure comprises 431 residues: Beta-1,4-glucuronyltransferase 1 (431 aa).

At 1 to 11 (MHFSKKCSVFK) the chain is on the cytoplasmic side. A helical transmembrane segment spans residues 12 to 32 (VVLSALLIVALLQLLYLSFLS). At 33-431 (KLHGKQQRYK…AKYPTSPRRC (399 aa)) the chain is on the lumenal side. N-linked (GlcNAc...) asparagine glycosylation is present at Asn216. Mn(2+) contacts are provided by Asp241 and Asp243. N-linked (GlcNAc...) asparagine glycosylation is present at Asn314.

Belongs to the glycosyltransferase 49 family. Requires Mn(2+) as cofactor.

The protein resides in the golgi apparatus membrane. It carries out the reaction 3-O-[beta-D-Xyl-(1-&gt;4)-Rib-ol-P-Rib-ol-P-3-beta-D-GalNAc-(1-&gt;3)-beta-D-GlcNAc-(1-&gt;4)-(O-6-P-alpha-D-Man)]-Thr-[protein] + UDP-alpha-D-glucuronate = 3-O-[beta-D-GlcA-(1-&gt;3)-beta-D-Xyl-(1-&gt;4)-Rib-ol-P-Rib-ol-P-3-beta-D-GalNAc-(1-&gt;3)-beta-D-GlcNAc-(1-&gt;4)-(O-6-P-alpha-D-Man)]-Thr-[protein] + UDP + H(+). Its pathway is protein modification; protein glycosylation. In terms of biological role, beta-1,4-glucuronyltransferase involved in O-mannosylation of alpha-dystroglycan (DAG1). Transfers a glucuronic acid (GlcA) residue onto a xylose (Xyl) acceptor to produce the glucuronyl-beta-1,4-xylose-beta disaccharide primer, which is further elongated by LARGE, during synthesis of phosphorylated O-mannosyl glycan. Phosphorylated O-mannosyl glycan is a carbohydrate structure present in alpha-dystroglycan (DAG1), which is required for binding laminin G-like domain-containing extracellular proteins with high affinity. Required for axon guidance; via its function in O-mannosylation of alpha-dystroglycan (DAG1). The polypeptide is Beta-1,4-glucuronyltransferase 1 (Danio rerio (Zebrafish)).